The following is a 255-amino-acid chain: Proteasome subunit alpha (255 aa).

Residues 190–201 show a composition bias toward polar residues; it reads PSTSGASGNGET. Positions 190–255 are disordered; sequence PSTSGASGNG…DKSSGDGEQN (66 aa). A compositionally biased stretch (basic and acidic residues) spans 202 to 217; sequence EPSKLEVAILDRERPG.

It belongs to the peptidase T1A family. The 20S proteasome core is composed of 14 alpha and 14 beta subunits that assemble into four stacked heptameric rings, resulting in a barrel-shaped structure. The two inner rings, each composed of seven catalytic beta subunits, are sandwiched by two outer rings, each composed of seven alpha subunits. The catalytic chamber with the active sites is on the inside of the barrel. Has a gated structure, the ends of the cylinder being occluded by the N-termini of the alpha-subunits. Is capped by the proteasome-associated ATPase, ARC.

Its subcellular location is the cytoplasm. It functions in the pathway protein degradation; proteasomal Pup-dependent pathway. With respect to regulation, the formation of the proteasomal ATPase ARC-20S proteasome complex, likely via the docking of the C-termini of ARC into the intersubunit pockets in the alpha-rings, may trigger opening of the gate for substrate entry. Interconversion between the open-gate and close-gate conformations leads to a dynamic regulation of the 20S proteasome proteolysis activity. Component of the proteasome core, a large protease complex with broad specificity involved in protein degradation. The chain is Proteasome subunit alpha from Saccharomonospora viridis (strain ATCC 15386 / DSM 43017 / JCM 3036 / CCUG 5913 / NBRC 12207 / NCIMB 9602 / P101) (Thermoactinomyces viridis).